A 431-amino-acid polypeptide reads, in one-letter code: SPI-1 type 3 secretion system ATPase (431 aa).

162 to 167 is a binding site for ATP; that stretch reads GCGKTM.

Belongs to the ATPase alpha/beta chains family. T3SS ATPase subfamily. As to quaternary structure, the core secretion machinery of the T3SS is composed of approximately 20 different proteins, including cytoplasmic components, a base, an export apparatus and a needle. This subunit is part of the cytosolic complex. Forms homohexamers.

The protein localises to the cytoplasm. The catalysed reaction is ATP + H2O + cellular proteinSide 1 = ADP + phosphate + cellular proteinSide 2.. ATPase component of the type III secretion system (T3SS), also called injectisome, which is used to inject bacterial effector proteins into eukaryotic host cells. Acts as a molecular motor to provide the energy that is required for the export of proteins. Required for type III secretion apparatus (T3SA) formation, proper protein secretion, host cell invasion and virulence. May play a critical role in T3SS substrate recognition, disassembly of the effector/chaperone complex and unfolding of the effector in an ATP-dependent manner prior to secretion. This is SPI-1 type 3 secretion system ATPase from Salmonella typhi.